A 162-amino-acid chain; its full sequence is Shikimate kinase (162 aa).

Residue 11–16 coordinates ATP; that stretch reads GSGKSS. Ser15 provides a ligand contact to Mg(2+). The substrate site is built by Asp33, Arg57, and Gly80. The tract at residues 109–123 is LID domain; sequence NQKEREKRPLLNNLT. Arg116 lines the ATP pocket. Residue Arg132 participates in substrate binding.

Belongs to the shikimate kinase family. Monomer. Mg(2+) serves as cofactor.

It is found in the cytoplasm. It catalyses the reaction shikimate + ATP = 3-phosphoshikimate + ADP + H(+). Its pathway is metabolic intermediate biosynthesis; chorismate biosynthesis; chorismate from D-erythrose 4-phosphate and phosphoenolpyruvate: step 5/7. Its function is as follows. Catalyzes the specific phosphorylation of the 3-hydroxyl group of shikimic acid using ATP as a cosubstrate. The polypeptide is Shikimate kinase (aroK) (Helicobacter pylori (strain ATCC 700392 / 26695) (Campylobacter pylori)).